The following is a 188-amino-acid chain: MFHQIWAALLYFYGIILNSIYQCPEHSQLTTLGVDGKEFPEVHLGQWYFIAGAAPTKEELATFDPVDNIVFNMAAGSAPMQLHLRATIRMKDGLCVPRKWIYHLTEGSTDLRTEGRPDMKTELFSSSCPGGIMLNETGQGYQRFLLYNRSPHPPEKCVEEFKSLTSCLDSKAFLLTPRNQEACELSNN.

Residues 1–22 (MFHQIWAALLYFYGIILNSIYQ) constitute a signal peptide (not cleaved). 3 disulfide bridges follow: Cys23–Cys167, Cys95–Cys183, and Cys128–Cys157. Residue Asn135 is glycosylated (N-linked (GlcNAc...) asparagine). Tetradecanoate is bound by residues Glu136 and Arg143.

This sequence belongs to the calycin superfamily. Lipocalin family. Highly divergent. Interacts with LRP2; LRP2 mediates APOM renal uptake and subsequent lysosomal degradation. Plasma protein. Expressed in liver and kidney.

It localises to the secreted. Probably involved in lipid transport. Can bind sphingosine-1-phosphate, myristic acid, palmitic acid and stearic acid, retinol, all-trans-retinoic acid and 9-cis-retinoic acid. In Homo sapiens (Human), this protein is Apolipoprotein M (APOM).